A 259-amino-acid polypeptide reads, in one-letter code: MPEDILVDIKRDYVLSKLRDNERIDGRGFDEFRKVEIIPNVIEKAEGSALVKLGDTQVVVGVKMQPGEPYPDTPDRGVIIVNAELVPLASPTFEPGPPDENSIELARVVDRGIRESEAVDLSKLVIEEGEKVWIVFVDIHALDDDGNLLDASALAAIAALMNTKVPAERFDLGEDYLLPVRDLPVSVTSLIVGNKYLVDPSREEMSVGDTTLTITTDKDDNVVAMQKSGGYLLDEKLFDELLDVSINCARKLREKFKEI.

Belongs to the RNase PH family. Rrp42 subfamily. Component of the archaeal exosome complex. Forms a hexameric ring-like arrangement composed of 3 Rrp41-Rrp42 heterodimers. The hexameric ring associates with a trimer of Rrp4 and/or Csl4 subunits.

The protein resides in the cytoplasm. Functionally, non-catalytic component of the exosome, which is a complex involved in RNA degradation. Contributes to the structuring of the Rrp41 active site. The protein is Exosome complex component Rrp42 of Archaeoglobus fulgidus (strain ATCC 49558 / DSM 4304 / JCM 9628 / NBRC 100126 / VC-16).